A 130-amino-acid polypeptide reads, in one-letter code: Small ribosomal subunit protein uS8 (130 aa).

It belongs to the universal ribosomal protein uS8 family. As to quaternary structure, part of the 30S ribosomal subunit. Contacts proteins S5 and S12.

Its function is as follows. One of the primary rRNA binding proteins, it binds directly to 16S rRNA central domain where it helps coordinate assembly of the platform of the 30S subunit. This Shewanella baltica (strain OS223) protein is Small ribosomal subunit protein uS8.